We begin with the raw amino-acid sequence, 179 residues long: Small ribosomal subunit protein uS5 (179 aa).

In terms of domain architecture, S5 DRBM spans 13-76; that stretch reads LDERVVLINR…EAAKRNLIRV (64 aa). The segment at 160–179 is disordered; it reads DMTPQELNARRMRRETTEAA.

The protein belongs to the universal ribosomal protein uS5 family. In terms of assembly, part of the 30S ribosomal subunit. Contacts proteins S4 and S8.

With S4 and S12 plays an important role in translational accuracy. In terms of biological role, located at the back of the 30S subunit body where it stabilizes the conformation of the head with respect to the body. The polypeptide is Small ribosomal subunit protein uS5 (Chloroflexus aggregans (strain MD-66 / DSM 9485)).